The following is a 621-amino-acid chain: Signal recognition particle receptor subunit alpha homolog (621 aa).

Residues 1-158 form an SRX region; sequence MFDQLAVFTP…KKFEQYFRIK (158 aa). A disordered region spans residues 167-217; sequence HINPDNFTKNGSVPQSHNKNTKKKLRDTKGKKQSTGNVGSGRKWGRDGGML. Polar residues predominate over residues 171-183; the sequence is DNFTKNGSVPQSH. The span at 185–198 shows a compositional bias: basic residues; that stretch reads KNTKKKLRDTKGKK. Serine 239 carries the phosphoserine modification. The tract at residues 398 to 620 is NG domain; that stretch reads YVFSIVGVNG…SVKWAVNTLM (223 aa). GTP contacts are provided by residues 404 to 411 and 510 to 514; these read GVNGVGKS and DTAGR. Serine 523 is modified (phosphoserine). Residue 572–575 coordinates GTP; the sequence is SKCD.

Belongs to the GTP-binding SRP family. In terms of assembly, heterodimer of an alpha and a beta chain.

It is found in the endoplasmic reticulum membrane. Functionally, component of the SRP (signal recognition particle) receptor (SR). Ensures, in conjunction with the signal recognition particle, the correct targeting of the nascent secretory proteins to the endoplasmic reticulum membrane system. GTP hydrolysis may enhance the fidelity of and provide unidirectionality to the targeting reaction. It is important but not essential for cell growth. May be directly involved in mitochondrial protein import. The protein is Signal recognition particle receptor subunit alpha homolog (SRP101) of Saccharomyces cerevisiae (strain ATCC 204508 / S288c) (Baker's yeast).